The chain runs to 782 residues: E3 UFM1-protein ligase 1 homolog (782 aa).

The tract at residues 405–478 (VSTQELEDDG…TRGGGGASKK (74 aa)) is disordered.

This sequence belongs to the UFL1 family.

Its function is as follows. E3 UFM1-protein ligase that mediates ufmylation of target proteins. This Drosophila sechellia (Fruit fly) protein is E3 UFM1-protein ligase 1 homolog.